A 402-amino-acid polypeptide reads, in one-letter code: Zinc finger protein CONSTANS-LIKE 14 (402 aa).

Residues cysteine 12, cysteine 15, cysteine 35, histidine 40, cysteine 55, cysteine 58, cysteine 78, and histidine 83 each coordinate Zn(2+). Residues 12 to 54 (CEFCGERTAVLFCRADTAKLCLPCDQHVHSANLLSRKHVRSQI) form a B box-type 1; atypical zinc finger. The B box-type 2; atypical zinc-finger motif lies at 55-97 (CDNCSKEPVSVRCFTDNLVLCQECDWDVHGSCSSSATHERSAV). Positions 287 to 322 (SYQQEDSVHSTSTKGQETSKSNNIPAAIHSHKSSND) are disordered. Polar residues predominate over residues 295–310 (HSTSTKGQETSKSNNI). A coiled-coil region spans residues 345 to 372 (VTNADLEQMAQNRDNAMQRYKEKKKTRR). Residues 357–399 (RDNAMQRYKEKKKTRRYDKTIRYETRKARAETRLRVKGRFVKA) form the CCT domain.

This sequence belongs to the CONSTANS family.

The protein resides in the nucleus. This is Zinc finger protein CONSTANS-LIKE 14 (COL14) from Arabidopsis thaliana (Mouse-ear cress).